The following is a 201-amino-acid chain: Small ribosomal subunit protein uS4c (201 aa).

Positions 1 to 14 (MSRYRGPRFKKIRR) are enriched in basic residues. The tract at residues 1–44 (MSRYRGPRFKKIRRLGALPGLTSKRPRAGSDPRNQSRSGKKSQY) is disordered. One can recognise an S4 RNA-binding domain in the interval 89–152 (MRLDNTLFRL…NSRTLVQNLL (64 aa)).

Belongs to the universal ribosomal protein uS4 family. In terms of assembly, part of the 30S ribosomal subunit. Contacts protein S5. The interaction surface between S4 and S5 is involved in control of translational fidelity.

It localises to the plastid. Its subcellular location is the chloroplast. Functionally, one of the primary rRNA binding proteins, it binds directly to 16S rRNA where it nucleates assembly of the body of the 30S subunit. In terms of biological role, with S5 and S12 plays an important role in translational accuracy. In Draba nemorosa (Woodland whitlowgrass), this protein is Small ribosomal subunit protein uS4c (rps4).